Consider the following 221-residue polypeptide: Small ribosomal subunit protein uS3 (221 aa).

Positions 39–108 (IRKFVKKELF…NILINIVEVK (70 aa)) constitute a KH type-2 domain.

The protein belongs to the universal ribosomal protein uS3 family. As to quaternary structure, part of the 30S ribosomal subunit. Forms a tight complex with proteins S10 and S14.

Its function is as follows. Binds the lower part of the 30S subunit head. Binds mRNA in the 70S ribosome, positioning it for translation. This is Small ribosomal subunit protein uS3 from Clostridium botulinum (strain Alaska E43 / Type E3).